The chain runs to 212 residues: Ribonuclease P protein component 3 (212 aa).

Belongs to the eukaryotic/archaeal RNase P protein component 3 family. Consists of a catalytic RNA component and at least 5 protein subunits. Forms a heterotetrameric subcomplex with Rnp2. Reconstituted enzyme missing individual protein subunits is suboptimally active, showing each subunit contributes to optimization of activity.

It is found in the cytoplasm. It carries out the reaction Endonucleolytic cleavage of RNA, removing 5'-extranucleotides from tRNA precursor.. Functionally, part of ribonuclease P, a protein complex that generates mature tRNA molecules by cleaving their 5'-ends. Not absolutely essential for activity in vitro, however it strongly stimulates activity. Binds RNase P RNA. The sequence is that of Ribonuclease P protein component 3 from Pyrococcus horikoshii (strain ATCC 700860 / DSM 12428 / JCM 9974 / NBRC 100139 / OT-3).